The sequence spans 515 residues: Serine/threonine-protein kinase STE7 (515 aa).

Positions 191–466 constitute a Protein kinase domain; sequence LVQLGKIGAG…IHELLHHDLI (276 aa). Residues 197 to 205 and Lys220 each bind ATP; that span reads IGAGNSGTV. Residue Asp331 is the Proton acceptor of the active site. Position 359 is a phosphoserine (Ser359). Thr363 carries the phosphothreonine modification.

This sequence belongs to the protein kinase superfamily. STE Ser/Thr protein kinase family. MAP kinase kinase subfamily.

It catalyses the reaction L-seryl-[protein] + ATP = O-phospho-L-seryl-[protein] + ADP + H(+). It carries out the reaction L-threonyl-[protein] + ATP = O-phospho-L-threonyl-[protein] + ADP + H(+). The enzyme catalyses L-tyrosyl-[protein] + ATP = O-phospho-L-tyrosyl-[protein] + ADP + H(+). With respect to regulation, phosphorylated at multiple sites in response to pheromone. In terms of biological role, serine/threonine protein kinase required for cell-type-specific transcription and signal transduction in yeast. It is thought that it is phosphorylated by the ste11 protein kinase and that it can phosphorylate the FUS3 and or KSS1 kinases. The sequence is that of Serine/threonine-protein kinase STE7 (STE7) from Saccharomyces cerevisiae (strain ATCC 204508 / S288c) (Baker's yeast).